The following is a 359-amino-acid chain: 4-galactosyl-N-acetylglucosaminide 3-alpha-L-fucosyltransferase FUT6 (359 aa).

At 1 to 14 (MDPLGPAKPQWSWR) the chain is on the cytoplasmic side. The helical; Signal-anchor for type II membrane protein transmembrane segment at 15–34 (CCLTTLLFQLLMAVCFFSYL) threads the bilayer. Over 35 to 359 (RVSQDDPTVY…QTRGIAAWFT (325 aa)) the chain is Lumenal. N-linked (GlcNAc...) asparagine glycosylation is found at Asn46, Asn91, Asn153, and Asn184. A determines site-specific fucosylation region spans residues 73-112 (KPIALPRCSEMVPGTADCNITADRKVYPQADAVIVHHREV).

This sequence belongs to the glycosyltransferase 10 family. Homodimer and monomer. Monomer (secreted form). Post-translationally, N-glycosylated. In terms of processing, proteolytic cleavage releases a secreted glycoform of 43 kDa. In terms of tissue distribution, kidney, liver, colon, small intestine, bladder, uterus and salivary gland.

Its subcellular location is the golgi apparatus. The protein resides in the golgi stack membrane. The protein localises to the secreted. The enzyme catalyses a beta-D-galactosyl-(1-&gt;4)-N-acetyl-beta-D-glucosaminyl derivative + GDP-beta-L-fucose = a beta-D-galactosyl-(1-&gt;4)-[alpha-L-fucosyl-(1-&gt;3)]-N-acetyl-beta-D-glucosaminyl derivative + GDP + H(+). It carries out the reaction an N-acetyl-alpha-neuraminyl-(2-&gt;3)-beta-D-galactosyl-(1-&gt;4)-N-acetyl-beta-D-glucosaminyl derivative + GDP-beta-L-fucose = an alpha-Neu5Ac-(2-&gt;3)-beta-D-Gal-(1-&gt;4)-[alpha-L-Fuc-(1-&gt;3)]-beta-D-GlcNAc derivative + GDP + H(+). The catalysed reaction is an alpha-Neu5Ac-(2-&gt;3)-beta-D-Gal-(1-&gt;4)-beta-D-GlcNAc-(1-&gt;3)-beta-D-Gal-(1-&gt;4)-[alpha-L-Fuc-(1-&gt;3)]-beta-D-GlcNAc derivative + GDP-beta-L-fucose = an alpha-Neu5Ac-(2-&gt;3)-beta-D-Gal-(1-&gt;4)-[alpha-L-Fuc-(1-&gt;3)]-beta-D-GlcNAc-(1-&gt;3)-beta-D-Gal-(1-&gt;4)-[alpha-L-Fuc-(1-&gt;3)]-beta-D-GlcNAc derivative + GDP + H(+). It catalyses the reaction a neolactoside nLc6Cer + GDP-beta-L-fucose = beta-D-Gal-(1-&gt;4)-[alpha-L-Fuc-(1-&gt;3)]-beta-D-GlcNAc-(1-&gt;3)-beta-D-Gal-(1-&gt;4)-beta-D-GlcNAc-(1-&gt;3)-beta-D-Gal-(1-&gt;4)-beta-D-Glc-(1&lt;-&gt;1')-Cer + GDP + H(+). The enzyme catalyses a neolactoside nLc6Cer + GDP-beta-L-fucose = beta-D-galactosyl-(1-&gt;4)-N-acetyl-beta-D-glucosaminyl-(1-&gt;3)-beta-D-galactosyl-(1-&gt;4)-[alpha-L-fucosyl-(1-&gt;3)]-N-acetyl-beta-D-glucosaminyl-(1-&gt;3)-beta-D-galactosyl-(1-&gt;4)-beta-D-glucosyl-(1&lt;-&gt;1')-ceramide + GDP + H(+). It carries out the reaction a neolactoside VI(3)-alpha-NeuNAc-nLc6Cer + GDP-beta-L-fucose = a neolactoside VI(3)-alpha-NeuAc,V(3)-alphaFuc-nLc6Cer + GDP + H(+). The catalysed reaction is beta-D-galactosyl-(1-&gt;4)-N-acetyl-D-glucosamine + GDP-beta-L-fucose = beta-D-galactosyl-(1-&gt;4)-[alpha-L-fucosyl-(1-&gt;3)]-N-acetyl-D-glucosamine + GDP + H(+). It catalyses the reaction N-acetyl-alpha-neuraminosyl-(2-&gt;3)-beta-D-galactosyl-(1-&gt;4)-N-acetyl-beta-D-glucosamine + GDP-beta-L-fucose = N-acetyl-alpha-neuraminosyl-(2-&gt;3)-beta-D-galactosyl-(1-&gt;4)-[alpha-L-fucosyl-(1-&gt;3)]-N-acetyl-beta-D-glucosamine + GDP + H(+). The enzyme catalyses lactose + GDP-beta-L-fucose = beta-D-galactosyl-(1-&gt;4)-[alpha-L-fucosyl-(1-&gt;3)]-D-glucose + GDP + H(+). It carries out the reaction alpha-L-Fuc-(1-&gt;2)-beta-D-Gal-(1-&gt;4)-D-Glc + GDP-beta-L-fucose = alpha-L-Fuc-(1-&gt;2)-beta-D-Gal-(1-&gt;4)-[alpha-L-Fuc-(1-&gt;3)]-D-Glc + GDP + H(+). The catalysed reaction is a beta-D-galactosyl-(1-&gt;4)-N-acetyl-beta-D-6-sulfooxy-glucosaminyl derivative + GDP-beta-L-fucose = a beta-D-galactosyl-(1-&gt;4)-[alpha-L-fucosyl-(1-&gt;3)]-N-acetyl-beta-D-6-sulfooxy-glucosaminyl derivative + GDP + H(+). It participates in protein modification; protein glycosylation. In terms of biological role, catalyzes the transfer of L-fucose, from a guanosine diphosphate-beta-L-fucose, to the N-acetyl glucosamine (GlcNAc) of a distal alpha2,3 sialylated lactosamine unit of a glycoprotein- or a glycolipid-linked sialopolylactosamines chain or of a distal or internal lactosamine unit of a neutral glycoprotein- or a glycolipid-linked polylactosamines chain through an alpha-1,3 glycosidic linkage and participates in surface expression of the sialyl Lewis X (sLe(x)), Lewis X (Le(x)) and non sialylated VIM2 determinants. Moreover transfers fucose to H-type 2 (Fucalpha1-2Galbeta1-4GlcNAc) chain acceptor substrates and participates in difucosylated sialyl Lewis x determinants. Also fucosylates a polylactosamine substrate having a 6 sulfate modification at the GlcNAc moiety and gives rise to sialyl and non-sialyl 6-sulfo lewis X. Does not have activity towards type 1 ((Galbeta1-3GlcNAc)) and H-type 1 chain (Fucalpha1-2Galbeta1-3GlcNAc) acceptors substrates. Its function is as follows. Does not have alpha(1,3)-fucosyltransferase activity. This chain is 4-galactosyl-N-acetylglucosaminide 3-alpha-L-fucosyltransferase FUT6, found in Homo sapiens (Human).